Reading from the N-terminus, the 1179-residue chain is DNA-directed RNA polymerase subunit beta (1179 aa).

Positions 1153 to 1162 (MREMEDEDEG) are enriched in acidic residues. Residues 1153-1179 (MREMEDEDEGNGEKLNLVLEGGSLNEE) are disordered.

Belongs to the RNA polymerase beta chain family. The RNAP catalytic core consists of 2 alpha, 1 beta, 1 beta' and 1 omega subunit. When a sigma factor is associated with the core the holoenzyme is formed, which can initiate transcription.

It carries out the reaction RNA(n) + a ribonucleoside 5'-triphosphate = RNA(n+1) + diphosphate. Functionally, DNA-dependent RNA polymerase catalyzes the transcription of DNA into RNA using the four ribonucleoside triphosphates as substrates. This is DNA-directed RNA polymerase subunit beta from Brevibacillus brevis (strain 47 / JCM 6285 / NBRC 100599).